Here is a 785-residue protein sequence, read N- to C-terminus: Potassium transporter 5 (785 aa).

Residues 1-60 (MDGEEHQIDGDEVNNHENKLNEKKKSWGKLYRPDSFIIEAGQTPTNTGRRSLMSWRTTMS) lie on the Cytoplasmic side of the membrane. Serine 35 carries the phosphoserine modification. Residues 61 to 81 (LAFQSLGVVYGDIGTSPLYVY) form a helical membrane-spanning segment. Topologically, residues 82–97 (ASTFTDGINDKDDVVG) are extracellular. Residues 98 to 118 (VLSLIIYTITLVALLKYVFIV) form a helical membrane-spanning segment. Residues 119 to 184 (LQANDNGEGG…EKLENSKFAK (66 aa)) are Cytoplasmic-facing. A helical membrane pass occupies residues 185-205 (IILFLVTIMGTSMVIGDGILT). Residues 206 to 218 (PSISVLSAVSGIK) lie on the Extracellular side of the membrane. The chain crosses the membrane as a helical span at residues 219–239 (SLGQNTVVGVSVAILIVLFAF). The Cytoplasmic segment spans residues 240 to 247 (QRFGTDKV). The helical transmembrane segment at 248–268 (GFSFAPIILVWFTFLIGIGLF) threads the bilayer. Residues 269-297 (NLFKHDITVLKALNPLYIIYYFRRTGRQG) are Extracellular-facing. Residues 298 to 318 (WISLGGVFLCITGTEAMFADL) form a helical membrane-spanning segment. Over 319–327 (GHFSVRAVQ) the chain is Cytoplasmic. A helical membrane pass occupies residues 328–348 (ISFSCVAYPALVTIYCGQAAY). At 349 to 367 (LTKHTYNVSNTFYDSIPDP) the chain is on the extracellular side. A glycan (N-linked (GlcNAc...) asparagine) is linked at asparagine 355. Residues 368 to 388 (LYWPTFVVAVAASIIASQAMI) form a helical membrane-spanning segment. Residues 389–419 (SGAFSVISQSLRMGCFPRVKVVHTSAKYEGQ) are Cytoplasmic-facing. Residues 420-440 (VYIPEINYLLMLACIAVTLAF) form a helical membrane-spanning segment. The Extracellular segment spans residues 441–451 (RTTEKIGHAYG). Residues 452–472 (IAVVTVMVITTLMVTLIMLVI) form a helical membrane-spanning segment. The Cytoplasmic segment spans residues 473–476 (WKTN). Residues 477-497 (IVWIAIFLVVFGSIEMLYLSS) form a helical membrane-spanning segment. The Extracellular segment spans residues 498–501 (VMYK). The helical transmembrane segment at 502–522 (FTSGGYLPLTITVVLMAMMAI) threads the bilayer. The Cytoplasmic portion of the chain corresponds to 523-785 (WQYVHVLKYR…LLKVGMTYEL (263 aa)). The disordered stretch occupies residues 660–699 (GGEVDETDKEEEPNAETTVVPSSNYVPSSGRIGSAHSSSS). The segment covering 662-673 (EVDETDKEEEPN) has biased composition (acidic residues). Positions 674–686 (AETTVVPSSNYVP) are enriched in polar residues. Over residues 687 to 697 (SSGRIGSAHSS) the composition is skewed to low complexity.

The protein belongs to the HAK/KUP transporter (TC 2.A.72.3) family. Interacts with ILK1. Phosphorylated at the N-terminus (amino acids 1-95) by CIPK23. As to expression, predominantly expressed in the roots.

Its subcellular location is the cell membrane. High-affinity potassium transporter. Can also transport rubidium and cesium. Is essential with AKT1 for high-affinity potassium uptake in roots during seedling establishment and postgermination growth under low potassium conditions. Mediates potassium uptake by plant roots in response to low potassium conditions, by a calcium-, CBL-, and CIPK-dependent pathway. Positively regulated by the calcium sensors calcineurin B-like genes CBL1, CBL8, CBL9 and CBL10, and by phosphorylation by CIPK23. The protein is Potassium transporter 5 (POT5) of Arabidopsis thaliana (Mouse-ear cress).